Consider the following 473-residue polypeptide: Probable acid phosphatase DDB_G0284755 (473 aa).

The active-site Nucleophile is the His-94. The active-site Proton donor is the Asp-359.

This sequence belongs to the histidine acid phosphatase family.

The enzyme catalyses a phosphate monoester + H2O = an alcohol + phosphate. The chain is Probable acid phosphatase DDB_G0284755 from Dictyostelium discoideum (Social amoeba).